The primary structure comprises 144 residues: Small ribosomal subunit protein uS19 (144 aa).

Belongs to the universal ribosomal protein uS19 family.

Protein S19 forms a complex with S13 that binds strongly to the 16S ribosomal RNA. The polypeptide is Small ribosomal subunit protein uS19 (rps19) (Aeropyrum pernix (strain ATCC 700893 / DSM 11879 / JCM 9820 / NBRC 100138 / K1)).